The sequence spans 885 residues: GPI ethanolamine phosphate transferase 2 (885 aa).

Residues N82, N155, and N194 are each glycosylated (N-linked (GlcNAc...) asparagine). Residues 413 to 433 (DIYAGALILVITALAVIVVFN) traverse the membrane as a helical segment. N-linked (GlcNAc...) asparagine glycosylation occurs at N443. 3 helical membrane passes run 447 to 467 (VMFY…SSLI), 473 to 493 (IWYF…FDTF), and 495 to 514 (SLQN…FMRS). An N-linked (GlcNAc...) asparagine glycan is attached at N516. 8 consecutive transmembrane segments (helical) span residues 539–559 (LMWG…YIQG), 581–601 (GLIS…FKLL), 648–668 (IQLS…RVII), 697–717 (ENIP…KLIY), 726–746 (YILT…FCMG), 768–788 (VFLV…FWSL), 820–840 (ILLV…VNLV), and 865–885 (SWIL…VLLF).

It belongs to the PIGG/PIGN/PIGO family. PIGG subfamily.

Its subcellular location is the endoplasmic reticulum membrane. It functions in the pathway glycolipid biosynthesis; glycosylphosphatidylinositol-anchor biosynthesis. Its function is as follows. Ethanolamine phosphate transferase involved in glycosylphosphatidylinositol-anchor biosynthesis. Transfers ethanolamine phosphate to the GPI second mannose. The sequence is that of GPI ethanolamine phosphate transferase 2 (GPI7) from Candida albicans (strain SC5314 / ATCC MYA-2876) (Yeast).